Here is a 351-residue protein sequence, read N- to C-terminus: Phosphoribosylformylglycinamidine cyclo-ligase (351 aa).

This sequence belongs to the AIR synthase family.

The protein localises to the cytoplasm. The enzyme catalyses 2-formamido-N(1)-(5-O-phospho-beta-D-ribosyl)acetamidine + ATP = 5-amino-1-(5-phospho-beta-D-ribosyl)imidazole + ADP + phosphate + H(+). It participates in purine metabolism; IMP biosynthesis via de novo pathway; 5-amino-1-(5-phospho-D-ribosyl)imidazole from N(2)-formyl-N(1)-(5-phospho-D-ribosyl)glycinamide: step 2/2. In Burkholderia lata (strain ATCC 17760 / DSM 23089 / LMG 22485 / NCIMB 9086 / R18194 / 383), this protein is Phosphoribosylformylglycinamidine cyclo-ligase.